A 251-amino-acid chain; its full sequence is Triosephosphate isomerase (251 aa).

A substrate-binding site is contributed by 9-11 (NWK). H95 serves as the catalytic Electrophile. E167 functions as the Proton acceptor in the catalytic mechanism. Residues G173, S212, and 233–234 (GG) contribute to the substrate site.

Belongs to the triosephosphate isomerase family. As to quaternary structure, homodimer.

The protein localises to the cytoplasm. The enzyme catalyses D-glyceraldehyde 3-phosphate = dihydroxyacetone phosphate. Its pathway is carbohydrate biosynthesis; gluconeogenesis. It functions in the pathway carbohydrate degradation; glycolysis; D-glyceraldehyde 3-phosphate from glycerone phosphate: step 1/1. Its function is as follows. Involved in the gluconeogenesis. Catalyzes stereospecifically the conversion of dihydroxyacetone phosphate (DHAP) to D-glyceraldehyde-3-phosphate (G3P). This Pseudomonas fluorescens (strain Pf0-1) protein is Triosephosphate isomerase.